Reading from the N-terminus, the 308-residue chain is Glutaminase (308 aa).

Residues Ser68, Asn118, Glu162, Asn169, Tyr193, Tyr244, and Val262 each contribute to the substrate site.

This sequence belongs to the glutaminase family. Homotetramer.

The enzyme catalyses L-glutamine + H2O = L-glutamate + NH4(+). The polypeptide is Glutaminase (Hahella chejuensis (strain KCTC 2396)).